The following is a 159-amino-acid chain: Cyclic pyranopterin monophosphate synthase (159 aa).

Substrate-binding positions include 75–77 (LCH) and 113–114 (ME). The active site involves Asp128.

Belongs to the MoaC family. As to quaternary structure, homohexamer; trimer of dimers.

It carries out the reaction (8S)-3',8-cyclo-7,8-dihydroguanosine 5'-triphosphate = cyclic pyranopterin phosphate + diphosphate. Its pathway is cofactor biosynthesis; molybdopterin biosynthesis. Its function is as follows. Catalyzes the conversion of (8S)-3',8-cyclo-7,8-dihydroguanosine 5'-triphosphate to cyclic pyranopterin monophosphate (cPMP). This is Cyclic pyranopterin monophosphate synthase from Serratia proteamaculans (strain 568).